A 257-amino-acid chain; its full sequence is UPF0246 protein Sama_0917 (257 aa).

This sequence belongs to the UPF0246 family.

The sequence is that of UPF0246 protein Sama_0917 from Shewanella amazonensis (strain ATCC BAA-1098 / SB2B).